A 316-amino-acid chain; its full sequence is GPI-specific phospholipase A2-like PGAP3 (316 aa).

Positions 1–19 (MFLAAAAFLLSAPASASQG) are cleaved as a signal peptide. Topologically, residues 20-97 (DKEPVYRDCV…GKWPFARFLC (78 aa)) are lumenal. The N-linked (GlcNAc...) asparagine glycan is linked to Asn36. A helical membrane pass occupies residues 98–118 (FEEPASALASLLNGLACLLML). Topologically, residues 119-131 (LRYRSAVPCQSPM) are cytoplasmic. Residues 132-152 (YHTITAFSLVSLNAWFWSTVF) traverse the membrane as a helical segment. Residues 153–165 (HTRDTYLTEKMDY) lie on the Lumenal side of the membrane. The helical transmembrane segment at 166–186 (FCASAVILYSIYLCCVRTLGL) threads the bilayer. Residues 187–194 (RRPAISSM) lie on the Cytoplasmic side of the membrane. A helical transmembrane segment spans residues 195–215 (VGVLLILAFTSHVSYLTFVSF). Topologically, residues 216 to 220 (DYGYN) are lumenal. The helical transmembrane segment at 221–241 (MAANASIGIINLLWWLCWCWL) threads the bilayer. The Cytoplasmic portion of the chain corresponds to 242 to 254 (NRRILPYWWRCGM). Residues 255 to 275 (VVLLLHGLALLELLDFPPLFW) form a helical membrane-spanning segment. Topologically, residues 276-278 (VLD) are lumenal. The helical transmembrane segment at 279 to 299 (AHAVWHLSTVPVHFLFYSFLI) threads the bilayer. Residues 300–316 (DDSLHLLNTEKPGVKLD) lie on the Cytoplasmic side of the membrane.

It belongs to the PGAP3 family.

It localises to the golgi apparatus membrane. In terms of biological role, involved in the fatty acid remodeling steps of GPI-anchor maturation where the unsaturated acyl chain at sn-2 of inositol phosphate is replaced by a saturated stearoyl chain. May catalyze the first step of the fatty acid remodeling, by removing the unsaturated acyl chain at sn-2 of inositol phosphate, generating a lyso-GPI intermediate. The fatty acid remodeling steps is critical for the integration of GPI-APs into lipid rafts. The protein is GPI-specific phospholipase A2-like PGAP3 of Danio rerio (Zebrafish).